We begin with the raw amino-acid sequence, 332 residues long: Homoarginine-6-hydroxylase 2-ODD-C23.1 (332 aa).

The 106-residue stretch at 182–287 (PFWVMRLIGY…RVCVAFFYET (106 aa)) folds into the Fe2OG dioxygenase domain. Positions 210, 212, and 268 each coordinate Fe cation. Residue Arg-278 coordinates 2-oxoglutarate.

It belongs to the iron/ascorbate-dependent oxidoreductase family. The cofactor is Fe(2+).

Its subcellular location is the cytoplasm. It is found in the cytosol. It catalyses the reaction L-homoarginine + 2-oxoglutarate + O2 = 6-hydroxy-L-homoarginine + succinate + CO2. Slightly inhibited by canavanine (Can), the 5-oxa-analog of arginine. 2-oxoglutarate-dependent dioxygenase catalyzing homoarginine 6-hydroxylation thus producing 6-hydroxy-L-homoarginine. Guanidine (Gd) is in turn synthesized by the spontaneous conversion of 6-hydroxy-L-homoarginine to (S)-2-amino-6-oxohexanoate (RHEA:79843); guanidine is a nitrogen-rich compound that can serve as a defense or signaling substance. The protein is Homoarginine-6-hydroxylase 2-ODD-C23.1 of Arabidopsis thaliana (Mouse-ear cress).